The following is a 107-amino-acid chain: Nucleoid-associated protein GOX0603 (107 aa).

Belongs to the YbaB/EbfC family. As to quaternary structure, homodimer.

The protein resides in the cytoplasm. Its subcellular location is the nucleoid. Its function is as follows. Binds to DNA and alters its conformation. May be involved in regulation of gene expression, nucleoid organization and DNA protection. The chain is Nucleoid-associated protein GOX0603 from Gluconobacter oxydans (strain 621H) (Gluconobacter suboxydans).